A 357-amino-acid chain; its full sequence is Alternative oxidase, mitochondrial (357 aa).

A helical transmembrane segment spans residues L152–I172. Residues E159, E198, and H201 each coordinate Fe cation. Residues I218–P238 traverse the membrane as a helical segment. Positions 249, 304, and 307 each coordinate Fe cation. A disordered region spans residues I330 to L357. A compositionally biased stretch (basic and acidic residues) spans H348–L357.

The protein belongs to the alternative oxidase family. Fe cation serves as cofactor.

Its subcellular location is the mitochondrion inner membrane. Catalyzes cyanide-resistant oxygen consumption. May increase respiration when the cytochrome respiratory pathway is restricted, or in response to low temperatures. The sequence is that of Alternative oxidase, mitochondrial (STO1) from Scheffersomyces stipitis (strain ATCC 58785 / CBS 6054 / NBRC 10063 / NRRL Y-11545) (Yeast).